The chain runs to 299 residues: dTDP-4-dehydrorhamnose reductase (299 aa).

NADH-binding positions include 10–12 (GQV), Asp30, 39–40 (DF), and 63–65 (AHT). 11–12 (QV) is a binding site for NADPH. Residues 39 to 40 (DF), 63 to 65 (AHT), and Tyr102 each bind NADPH. 104-105 (TD) contacts dTDP-beta-L-rhamnose. NADH is bound by residues Tyr128 and Lys132. NADPH contacts are provided by Tyr128 and Lys132. Catalysis depends on Tyr128, which acts as the Proton donor/acceptor. Trp153 contacts dTDP-beta-L-rhamnose.

Belongs to the dTDP-4-dehydrorhamnose reductase family. In terms of assembly, homodimer. Mg(2+) is required as a cofactor.

It catalyses the reaction dTDP-beta-L-rhamnose + NADP(+) = dTDP-4-dehydro-beta-L-rhamnose + NADPH + H(+). It participates in carbohydrate biosynthesis; dTDP-L-rhamnose biosynthesis. It functions in the pathway bacterial outer membrane biogenesis; LPS O-antigen biosynthesis. Involved in the biosynthesis of the dTDP-L-rhamnose which is an important component of lipopolysaccharide (LPS). Catalyzes the reduction of dTDP-6-deoxy-L-lyxo-4-hexulose to yield dTDP-L-rhamnose. RmlD uses NADH and NADPH nearly equally well. This Shigella flexneri protein is dTDP-4-dehydrorhamnose reductase.